Consider the following 284-residue polypeptide: MSKPDLASLEKTIEKAFDERDAISTATRGETRDAIQAALDLLDRGTVRVAERQADGKWHVNQWLKKAVLLSFRLNPMEIIKGGPGQAVWWDKVPSKFDGWSAVDFEKAGFRAVPSSIVRRSAYVAPGAVLMPSFVNVGAYVDTGTMVDTWASVGSCAQIGKNVHLSGGVGIGGVLEPMQAGPTIIEDNCFIGARSEVVEGCIVREGSVLGMGVFIGQSTKIVDRATGEIFYGEVPPNSVVVAGSLPGKPFPNNEPGPGLYCAVIVKRVDAKTRSKTSINELLRD.

2 residues coordinate substrate: arginine 111 and aspartate 148.

The protein belongs to the transferase hexapeptide repeat family. As to quaternary structure, homotrimer.

The protein localises to the cytoplasm. It carries out the reaction (S)-2,3,4,5-tetrahydrodipicolinate + succinyl-CoA + H2O = (S)-2-succinylamino-6-oxoheptanedioate + CoA. It functions in the pathway amino-acid biosynthesis; L-lysine biosynthesis via DAP pathway; LL-2,6-diaminopimelate from (S)-tetrahydrodipicolinate (succinylase route): step 1/3. The protein is 2,3,4,5-tetrahydropyridine-2,6-dicarboxylate N-succinyltransferase of Mesorhizobium japonicum (strain LMG 29417 / CECT 9101 / MAFF 303099) (Mesorhizobium loti (strain MAFF 303099)).